The chain runs to 135 residues: Galectin-1 (135 aa).

Position 2 is an N-acetylalanine (alanine 2). In terms of domain architecture, Galectin spans 4–135 (GLVASNLNLK…DFKIKCVAFD (132 aa)). Lysine 13 and lysine 29 each carry N6-acetyllysine. Serine 30 bears the Phosphoserine mark. A beta-D-galactoside contacts are provided by residues 45-49 (HFNPR), histidine 53, asparagine 62, and 69-72 (WGTE). Lysine 108 carries the N6-acetyllysine; alternate modification. Residue lysine 108 is modified to N6-succinyllysine; alternate. The residue at position 128 (lysine 128) is an N6-acetyllysine.

Homodimer. Binds LGALS3BP. Interacts with CD2, CD3, CD4, CD6, CD7, CD43, ALCAM and CD45. Interacts with laminin (via poly-N-acetyllactosamine). Interacts with SUSD2.

It is found in the secreted. The protein localises to the extracellular space. The protein resides in the extracellular matrix. Functionally, lectin that binds beta-galactoside and a wide array of complex carbohydrates. Plays a role in regulating apoptosis, cell proliferation and cell differentiation. Inhibits CD45 protein phosphatase activity and therefore the dephosphorylation of Lyn kinase. Strong inducer of T-cell apoptosis. In Pongo abelii (Sumatran orangutan), this protein is Galectin-1 (LGALS1).